The following is a 387-amino-acid chain: Deoxyguanosinetriphosphate triphosphohydrolase-like protein (387 aa).

The interval 1-26 (MTAPYASDPQRARGRRVKEEESTFRS) is disordered. Residues 17 to 26 (VKEEESTFRS) show a composition bias toward basic and acidic residues. An HD domain is found at 62–198 (RLTHSIEVAQ…AAIADDVAYN (137 aa)).

Belongs to the dGTPase family. Type 2 subfamily.

The sequence is that of Deoxyguanosinetriphosphate triphosphohydrolase-like protein from Roseobacter denitrificans (strain ATCC 33942 / OCh 114) (Erythrobacter sp. (strain OCh 114)).